Reading from the N-terminus, the 561-residue chain is Ankyrin repeat protein OPG189 (561 aa).

7 ANK repeats span residues 68-98 (YGEN…NINK), 172-208 (YGCT…DVDK), 212-242 (YGNT…NIDS), 246-275 (NGYT…NVNA), 279-307 (FGTT…ELEI), 342-371 (YNET…DFET), and 375-404 (SGCT…SLKI).

It belongs to the orthopoxvirus OPG189 protein family.

Its function is as follows. Contributes to viral release without involving rearrangement of host actin. This is Ankyrin repeat protein OPG189 (OPG189) from Cynomys gunnisoni (Gunnison's prairie dog).